Reading from the N-terminus, the 423-residue chain is Putative competence-damage inducible protein (423 aa).

It belongs to the CinA family.

The protein is Putative competence-damage inducible protein of Streptococcus pyogenes serotype M49 (strain NZ131).